Reading from the N-terminus, the 394-residue chain is Choline/ethanolamine kinase (394 aa).

A2 is subject to N-acetylalanine. The disordered stretch occupies residues 22–42 (GLLDAKCPEPIPNRRRSSSLS). ATP is bound by residues 75–81 (SGGLSNL), R104, 146–152 (QYLPSRP), Q244, and D264. Residue 77–79 (GLS) coordinates substrate.

The protein belongs to the choline/ethanolamine kinase family. In terms of assembly, homodimer, and heterodimer with CHKA.

The catalysed reaction is choline + ATP = phosphocholine + ADP + H(+). It catalyses the reaction ethanolamine + ATP = phosphoethanolamine + ADP + H(+). The protein operates within phospholipid metabolism; phosphatidylethanolamine biosynthesis; phosphatidylethanolamine from ethanolamine: step 1/3. In terms of biological role, has a key role in phospholipid metabolism, and catalyzes the first step of phosphatidylethanolamine and phosphatidylcholine biosynthesis. The polypeptide is Choline/ethanolamine kinase (Chkb) (Rattus norvegicus (Rat)).